The chain runs to 193 residues: Holliday junction branch migration complex subunit RuvA (193 aa).

The domain I stretch occupies residues 1–64; sequence MIGRIQGTLV…EDAQQLFGFA (64 aa). Positions 65 to 139 are domain II; it reads TETEREAFRQ…GKLAPDLGVA (75 aa). The interval 139 to 143 is flexible linker; it reads AGGKP. Residues 144-193 form a domain III region; sequence QAIETSSEVLQALLALGYSEKEALLALKQIPADTSISDGIRMGLKYLSKA.

It belongs to the RuvA family. As to quaternary structure, homotetramer. Forms an RuvA(8)-RuvB(12)-Holliday junction (HJ) complex. HJ DNA is sandwiched between 2 RuvA tetramers; dsDNA enters through RuvA and exits via RuvB. An RuvB hexamer assembles on each DNA strand where it exits the tetramer. Each RuvB hexamer is contacted by two RuvA subunits (via domain III) on 2 adjacent RuvB subunits; this complex drives branch migration. In the full resolvosome a probable DNA-RuvA(4)-RuvB(12)-RuvC(2) complex forms which resolves the HJ.

It is found in the cytoplasm. In terms of biological role, the RuvA-RuvB-RuvC complex processes Holliday junction (HJ) DNA during genetic recombination and DNA repair, while the RuvA-RuvB complex plays an important role in the rescue of blocked DNA replication forks via replication fork reversal (RFR). RuvA specifically binds to HJ cruciform DNA, conferring on it an open structure. The RuvB hexamer acts as an ATP-dependent pump, pulling dsDNA into and through the RuvAB complex. HJ branch migration allows RuvC to scan DNA until it finds its consensus sequence, where it cleaves and resolves the cruciform DNA. This chain is Holliday junction branch migration complex subunit RuvA, found in Polynucleobacter necessarius subsp. necessarius (strain STIR1).